Reading from the N-terminus, the 189-residue chain is NADH-quinone oxidoreductase subunit B (189 aa).

[4Fe-4S] cluster-binding residues include Cys39, Cys40, Cys104, and Cys135.

This sequence belongs to the complex I 20 kDa subunit family. As to quaternary structure, NDH-1 is composed of 14 different subunits. Subunits NuoB, C, D, E, F, and G constitute the peripheral sector of the complex. [4Fe-4S] cluster serves as cofactor.

It is found in the cell inner membrane. The catalysed reaction is a quinone + NADH + 5 H(+)(in) = a quinol + NAD(+) + 4 H(+)(out). In terms of biological role, NDH-1 shuttles electrons from NADH, via FMN and iron-sulfur (Fe-S) centers, to quinones in the respiratory chain. The immediate electron acceptor for the enzyme in this species is believed to be a menaquinone. Couples the redox reaction to proton translocation (for every two electrons transferred, four hydrogen ions are translocated across the cytoplasmic membrane), and thus conserves the redox energy in a proton gradient. The protein is NADH-quinone oxidoreductase subunit B of Chlorobium phaeovibrioides (strain DSM 265 / 1930) (Prosthecochloris vibrioformis (strain DSM 265)).